Consider the following 70-residue polypeptide: Conotoxin Cal6.11 (70 aa).

The N-terminal stretch at 1 to 22 (MKLTCVLIIAVLILTACQFIAA) is a signal peptide. The propeptide occupies 23–43 (DNTEYRKWRRSGTSTGMRLGS). 3 disulfides stabilise this stretch: C46–C57, C50–C62, and C56–C69. 2 positions are modified to 4-hydroxyproline: P48 and P58. Residues E60 and E67 each carry the 4-carboxyglutamate modification.

It belongs to the conotoxin O1 superfamily. In terms of tissue distribution, expressed by the venom duct.

It localises to the secreted. Probable neurotoxin with unknown target. Possibly targets ion channels. In Californiconus californicus (California cone), this protein is Conotoxin Cal6.11.